The following is a 32-amino-acid chain: MPCSCKKYCDPWEVIDGSCGLFNSKYICCREK.

3 cysteine pairs are disulfide-bonded: cysteine 3/cysteine 29, cysteine 5/cysteine 19, and cysteine 9/cysteine 28.

It is found in the secreted. Functionally, has antimicrobial activity against E.coli and activates ion channel activity. The polypeptide is Corticostatin-related peptide RK-1 (Oryctolagus cuniculus (Rabbit)).